The following is a 465-amino-acid chain: Cytochrome c peroxidase Ccp (465 aa).

At 1 to 6 (MKMVSR) the chain is on the cytoplasmic side. The chain crosses the membrane as a helical span at residues 7–27 (ITAIGLAGVAICYLGLSGYVW). The Periplasmic portion of the chain corresponds to 28 to 465 (YHDNKRSKQA…VYTPYMQDKQ (438 aa)). Cytochrome c domains are found at residues 42–155 (SAVS…AKQR), 185–287 (QKVA…EKDP), and 337–454 (AQQK…HSLN). Heme c is bound by residues cysteine 59, cysteine 62, histidine 63, methionine 125, cysteine 207, cysteine 210, histidine 211, cysteine 351, cysteine 354, histidine 355, and methionine 429.

As to quaternary structure, the recombinant enzyme lacking its transmembrane domain is a monomer in solution. The cofactor is heme c.

The protein resides in the cell inner membrane. Its activity is regulated as follows. Does not require reductive activation for maximum activity, as peroxidatic heme is high-spin His/OH(-) 6-coordinated. Calcium ions are needed to attain maximum peroxidase activity. Its function is as follows. Cytochrome peroxidase that enables anaerobic respiration with H(2)O(2) as a terminal electron acceptor. It receives electrons from the quinol pool. Menaquinol is probably the electron donor in vivo. It can use menadiol (a menaquinol analog), hydroquinone, duroquinol and the artificial electron donor ABTS(2-) in vitro, but only menadiol and hydroquinone can efficiently transfer electrons to Ccp, maintaining the catalytic activity of the enzyme. It enables E.coli to grow on a nonfermentable carbon source when H(2)O(2) is supplied. Plays a role in the peroxide stress response under anaerobic conditions. However, it does not degrade H(2)O(2) quickly enough to lower the periplasmic H(2)O(2) level below that of the surrounding medium and protect the cell from its toxic effects. The sequence is that of Cytochrome c peroxidase Ccp from Escherichia coli (strain K12).